The following is a 266-amino-acid chain: tRNA pseudouridine synthase A (266 aa).

Residue D51 is the Nucleophile of the active site. Y106 is a binding site for substrate.

Belongs to the tRNA pseudouridine synthase TruA family.

The enzyme catalyses uridine(38/39/40) in tRNA = pseudouridine(38/39/40) in tRNA. Formation of pseudouridine at positions 38, 39 and 40 in the anticodon stem and loop of transfer RNAs. The polypeptide is tRNA pseudouridine synthase A (Pyrococcus furiosus (strain ATCC 43587 / DSM 3638 / JCM 8422 / Vc1)).